The primary structure comprises 205 residues: Probable thymidylate kinase (205 aa).

G10–T17 is an ATP binding site.

This sequence belongs to the thymidylate kinase family.

The catalysed reaction is dTMP + ATP = dTDP + ADP. The sequence is that of Probable thymidylate kinase (tmk) from Pyrococcus horikoshii (strain ATCC 700860 / DSM 12428 / JCM 9974 / NBRC 100139 / OT-3).